We begin with the raw amino-acid sequence, 168 residues long: uncharacterized protein (168 aa).

The transit peptide at 1–29 (MGWRFPSPSPRQASPVAPLLAAPTAVRSC) directs the protein to the mitochondrion. Basic and acidic residues predominate over residues 98 to 110 (GETKARRAREEGK). Residues 98-152 (GETKARRAREEGKLPSLGNAPAPRRRSVAWPAAEGSCAAPESSPPASEASLPAPE) are disordered. Residues 128–152 (PAAEGSCAAPESSPPASEASLPAPE) show a composition bias toward low complexity.

It localises to the mitochondrion. This is an uncharacterized protein from Homo sapiens (Human).